A 232-amino-acid polypeptide reads, in one-letter code: tRNA1(Val) (adenine(37)-N6)-methyltransferase (232 aa).

The protein belongs to the methyltransferase superfamily. tRNA (adenine-N(6)-)-methyltransferase family.

It is found in the cytoplasm. The catalysed reaction is adenosine(37) in tRNA1(Val) + S-adenosyl-L-methionine = N(6)-methyladenosine(37) in tRNA1(Val) + S-adenosyl-L-homocysteine + H(+). Specifically methylates the adenine in position 37 of tRNA(1)(Val) (anticodon cmo5UAC). The protein is tRNA1(Val) (adenine(37)-N6)-methyltransferase of Haemophilus influenzae (strain 86-028NP).